The primary structure comprises 190 residues: Endo-1,4-beta-xylanase (190 aa).

The GH11 domain maps to 1-190; the sequence is QTIGPGTGYS…SSGSASITVS (190 aa). Glutamate 86 serves as the catalytic Nucleophile. Glutamate 177 serves as the catalytic Proton donor.

The protein belongs to the glycosyl hydrolase 11 (cellulase G) family.

It catalyses the reaction Endohydrolysis of (1-&gt;4)-beta-D-xylosidic linkages in xylans.. It functions in the pathway glycan degradation; xylan degradation. This Trichoderma harzianum (Hypocrea lixii) protein is Endo-1,4-beta-xylanase.